Here is a 428-residue protein sequence, read N- to C-terminus: Somatostatin receptor type 3 (428 aa).

Positions 1–12 (MATVTYPSSEPT) are enriched in polar residues. Positions 1–20 (MATVTYPSSEPTTLDPGNAS) are disordered. At 1-45 (MATVTYPSSEPTTLDPGNASSTWPLDTTLGNTSAGASLTGLAVSG) the chain is on the extracellular side. Asn18 and Asn31 each carry an N-linked (GlcNAc...) asparagine glycan. A helical transmembrane segment spans residues 46–71 (ILISLVYLVVCVVGLLGNSLVIYVVL). Over 72–81 (RHTSSPSVTS) the chain is Cytoplasmic. The helical transmembrane segment at 82–103 (VYILNLALADELFMLGLPFLAA) threads the bilayer. Residues 104 to 118 (QNALSYWPFGSLMCR) lie on the Extracellular side of the membrane. Cys117 and Cys192 are disulfide-bonded. A helical membrane pass occupies residues 119–140 (LVMAVDGINQFTSIFCLTVMSV). The Cytoplasmic portion of the chain corresponds to 141–162 (DRYLAVVHPTRSARWRTAPVAR). A helical transmembrane segment spans residues 163 to 182 (TVSAAVWVASAVVVLPVVVF). Topologically, residues 183–206 (SGVPRGMSTCHMQWPEPAAAWRTA) are extracellular. A helical membrane pass occupies residues 207 to 232 (FIIYTAALGFFGPLLVICLCYLLIVV). Topologically, residues 233–266 (KVRSTTRRVRAPSCQWVQAPACQRRRRSERRVTR) are cytoplasmic. A helical membrane pass occupies residues 267–288 (MVVAVVALFVLCWMPFYLLNIV). Residues 289-302 (NVVCPLPEEPAFFG) are Extracellular-facing. Residues 303–325 (LYFLVVALPYANSCANPILYGFL) form a helical membrane-spanning segment. The Cytoplasmic portion of the chain corresponds to 326-428 (SYRFKQGFRR…GDKASTLSHL (103 aa)). Ser341, Ser346, and Ser351 each carry phosphoserine. Residues 344–428 (IRSQEPGSGP…GDKASTLSHL (85 aa)) are disordered. The residue at position 357 (Thr357) is a Phosphothreonine. The segment covering 357-370 (TEEEEDEEEEERRE) has biased composition (acidic residues). Polar residues predominate over residues 385-412 (RLSQIAQAGTSGQQPRPCTGTAKEQQLL).

The protein belongs to the G-protein coupled receptor 1 family. Homodimer and heterodimer with SSTR2. Heterodimerization with SSTR2 inactivates SSTR3 receptor function. In terms of processing, phosphorylated. Phosphorylation increases upon somatostatin binding. As to expression, in the brain, primarily observed in the forebrain. Moderate levels found throughout laminae 2-6 of the neocortex and allocortex, and high levels in lamina 2 of the piriform and entorhinal cortices. High levels also present in the cornu ammonis fields of the hippocampus. In the amygdala, highly expressed in the nucleus of the lateral olfactory tract with expression also detected in the rostral portions of the basal magnocellular and lateral nuclei. In the diencephalon, moderate levels observed in the ventromedial and arcuate nuclei of the hypothalamus. In the midbrain, moderate levels found in the lateral portion of the substantia nigra pars reticulata.

The protein resides in the cell membrane. In terms of biological role, receptor for somatostatin-14 and -28. This receptor is coupled via pertussis toxin sensitive G proteins to inhibition of adenylyl cyclase. This Mus musculus (Mouse) protein is Somatostatin receptor type 3 (Sstr3).